The primary structure comprises 219 residues: Claudin-3 (219 aa).

Topologically, residues Met-1 to Thr-8 are cytoplasmic. A helical membrane pass occupies residues Gly-9–Trp-29. The Extracellular portion of the chain corresponds to Arg-30–Arg-80. Residues Ala-81 to Ala-101 form a helical membrane-spanning segment. At Gln-102–Lys-115 the chain is on the cytoplasmic side. The chain crosses the membrane as a helical span at residues Ile-116–Ser-136. The Extracellular segment spans residues Trp-137–Thr-161. Residues Gly-162 to Cys-182 traverse the membrane as a helical segment. The Cytoplasmic segment spans residues Ser-183–Val-219. A Phosphotyrosine modification is found at Tyr-197. Position 198 is a phosphoserine (Ser-198). The interactions with TJP1, TJP2 and TJP3 stretch occupies residues Tyr-218–Val-219.

It belongs to the claudin family. As to quaternary structure, can form homo- and heteropolymers with other CLDN. Homopolymers interact with CLDN1 and CLDN2 homopolymers. Interacts in cis (within the same plasma membrane) with CLDN19. Directly interacts with TJP1/ZO-1, TJP2/ZO-2 and TJP3/ZO-3.

The protein resides in the cell junction. The protein localises to the tight junction. It is found in the cell membrane. In terms of biological role, plays a major role in tight junction-specific obliteration of the intercellular space, through calcium-independent cell-adhesion activity. This is Claudin-3 (Cldn3) from Rattus norvegicus (Rat).